A 187-amino-acid polypeptide reads, in one-letter code: Elongation factor P (187 aa).

This sequence belongs to the elongation factor P family.

It is found in the cytoplasm. It participates in protein biosynthesis; polypeptide chain elongation. In terms of biological role, involved in peptide bond synthesis. Stimulates efficient translation and peptide-bond synthesis on native or reconstituted 70S ribosomes in vitro. Probably functions indirectly by altering the affinity of the ribosome for aminoacyl-tRNA, thus increasing their reactivity as acceptors for peptidyl transferase. The protein is Elongation factor P of Roseiflexus castenholzii (strain DSM 13941 / HLO8).